Here is a 234-residue protein sequence, read N- to C-terminus: Probable transcriptional regulatory protein PSPPH_2212 (234 aa).

It belongs to the TACO1 family.

It localises to the cytoplasm. The protein is Probable transcriptional regulatory protein PSPPH_2212 of Pseudomonas savastanoi pv. phaseolicola (strain 1448A / Race 6) (Pseudomonas syringae pv. phaseolicola (strain 1448A / Race 6)).